Consider the following 447-residue polypeptide: uncharacterized protein (447 aa).

It belongs to the class-II fumarase/aspartase family.

The protein resides in the cytoplasm. It localises to the nucleus. This is an uncharacterized protein from Schizosaccharomyces pombe (strain 972 / ATCC 24843) (Fission yeast).